A 721-amino-acid chain; its full sequence is Ribosomal RNA large subunit methyltransferase K/L (721 aa).

Positions 56–167 (GMYKACLWSR…REVVTVSIDL (112 aa)) constitute a THUMP domain.

The protein belongs to the methyltransferase superfamily. RlmKL family.

Its subcellular location is the cytoplasm. The catalysed reaction is guanosine(2445) in 23S rRNA + S-adenosyl-L-methionine = N(2)-methylguanosine(2445) in 23S rRNA + S-adenosyl-L-homocysteine + H(+). It catalyses the reaction guanosine(2069) in 23S rRNA + S-adenosyl-L-methionine = N(2)-methylguanosine(2069) in 23S rRNA + S-adenosyl-L-homocysteine + H(+). In terms of biological role, specifically methylates the guanine in position 2445 (m2G2445) and the guanine in position 2069 (m7G2069) of 23S rRNA. The polypeptide is Ribosomal RNA large subunit methyltransferase K/L (Marinomonas sp. (strain MWYL1)).